A 308-amino-acid polypeptide reads, in one-letter code: Ribosomal protein L11 methyltransferase (308 aa).

S-adenosyl-L-methionine contacts are provided by threonine 148, glycine 169, aspartate 191, and asparagine 239.

It belongs to the methyltransferase superfamily. PrmA family.

It localises to the cytoplasm. It carries out the reaction L-lysyl-[protein] + 3 S-adenosyl-L-methionine = N(6),N(6),N(6)-trimethyl-L-lysyl-[protein] + 3 S-adenosyl-L-homocysteine + 3 H(+). Methylates ribosomal protein L11. This chain is Ribosomal protein L11 methyltransferase, found in Psychrobacter cryohalolentis (strain ATCC BAA-1226 / DSM 17306 / VKM B-2378 / K5).